Consider the following 261-residue polypeptide: Putative outer membrane protein TC_0650 (261 aa).

An N-terminal signal peptide occupies residues 1–17 (MRFLFAFILLCSPWVSE).

The protein localises to the cell outer membrane. In Chlamydia muridarum (strain MoPn / Nigg), this protein is Putative outer membrane protein TC_0650.